Here is a 175-residue protein sequence, read N- to C-terminus: Co-chaperone protein HscB homolog (175 aa).

The region spanning 7–79 is the J domain; that stretch reads SHFDLFHLPA…LKRATYLLHL (73 aa).

It belongs to the HscB family. In terms of assembly, interacts with HscA and stimulates its ATPase activity.

Co-chaperone involved in the maturation of iron-sulfur cluster-containing proteins. Seems to help targeting proteins to be folded toward HscA. The chain is Co-chaperone protein HscB homolog from Burkholderia mallei (strain ATCC 23344).